The primary structure comprises 58 residues: Small ribosomal subunit protein bS21 (58 aa).

The disordered stretch occupies residues 39 to 58 (DKPSVKKRAKSKAAAKYRSR). Residues 43–58 (VKKRAKSKAAAKYRSR) show a composition bias toward basic residues.

This sequence belongs to the bacterial ribosomal protein bS21 family.

This Chlamydia pneumoniae (Chlamydophila pneumoniae) protein is Small ribosomal subunit protein bS21 (rpsU).